The following is a 688-amino-acid chain: Methionine--tRNA ligase (688 aa).

The 'HIGH' region signature appears at 20 to 30; that stretch reads PYANGSIHLGH. 4 residues coordinate Zn(2+): Cys151, Cys154, Cys164, and Cys167. The 'KMSKS' region signature appears at 337 to 341; sequence KMSKS. Lys340 is a binding site for ATP. In terms of domain architecture, tRNA-binding spans 587-688; sequence TFAQVDLRIA…EGAQPGMRVM (102 aa).

Belongs to the class-I aminoacyl-tRNA synthetase family. MetG type 1 subfamily. Homodimer. The cofactor is Zn(2+).

It localises to the cytoplasm. The enzyme catalyses tRNA(Met) + L-methionine + ATP = L-methionyl-tRNA(Met) + AMP + diphosphate. In terms of biological role, is required not only for elongation of protein synthesis but also for the initiation of all mRNA translation through initiator tRNA(fMet) aminoacylation. This is Methionine--tRNA ligase from Vibrio parahaemolyticus serotype O3:K6 (strain RIMD 2210633).